The chain runs to 393 residues: MSSALTQQPAYRLAPSASSSTSDINAAPDADSKKKTGTKRRRPQDGTSDSADSSSQPPRTREGPKKKKANRACFHCQKAHLTCDDSRPCQRCVKRGMADNCTEGHRKKAKYLLDEEELAQPDPPYVPPDPMFPSSYTASAPFSLGSEGANLEYSILSAILGNSPDPTGPPNSGSPSVSHAPQPSAPFNGQPDIGAGSAISGGAQGAAAVYQAVTKPYDYTEGYHFLMKHLPTRFDKNDILRIVRALAIFRPSLIALQMPLSEEDEVFVEKCFQRSLIELDKLVSFSGTPTVAWRRTGEICLVGPEFCMLTGWEKEELVGRRKYIYELFENQSVVEYWENFANHAFENTTQSVYSHCVLLKPSGTPVPCTFCFSIRRDIMDLPSLVIGQWLPLL.

Residues 1-71 form a disordered region; sequence MSSALTQQPA…EGPKKKKANR (71 aa). The span at 45–58 shows a compositional bias: polar residues; the sequence is DGTSDSADSSSQPP. The segment at residues 73–101 is a DNA-binding region (zn(2)-C6 fungal-type); the sequence is CFHCQKAHLTCDDSRPCQRCVKRGMADNC. Positions 161–198 are disordered; that stretch reads GNSPDPTGPPNSGSPSVSHAPQPSAPFNGQPDIGAGSA. The span at 170-187 shows a compositional bias: polar residues; that stretch reads PNSGSPSVSHAPQPSAPF. Positions 275–348 constitute a PAS domain; it reads SLIELDKLVS…NFANHAFENT (74 aa).

Belongs to the ERT1/acuK family.

The protein localises to the nucleus. Transcription factor which regulates nonfermentable carbon utilization. Activator of gluconeogenetic genes. The chain is Transcription activator of gluconeogenesis ERT1 (ERT1) from Postia placenta (strain ATCC 44394 / Madison 698-R) (Brown rot fungus).